A 334-amino-acid polypeptide reads, in one-letter code: MSSAELEVLEYLNGHKDEVKGLKIVRVSGREILYSSSRDKKVFSWDLHSKIDSEFGKILKLYDGGHSKRINGLDVSKDGNMMVTVGSDGIGRIWDTESKKSILLEGHGRDVLCVSINSNDTKIVTGSVDRTMNLYNTKGDLVLKMGRDMEMMHRGWINCVTFHPTEESILASGSADGTVKIWDLDTQEHLQTYLGGAYVDYEKAKEKKTSPVDYDESKSVTAMAFSKDGSILTYGEKSGKMYLVKVDSKECIQSFDAIVPVRSIAVGETEPVIALGTDESVIIWETISSRVIASYNLKEIGNGVRCLSLAFSGSTLYCGLSTGAIVPLELRKSD.

WD repeat units lie at residues glycine 14–phenylalanine 55, glycine 65–leucine 104, glycine 106–methionine 145, methionine 152–threonine 192, aspartate 215–aspartate 256, and alanine 257–serine 294.

This sequence belongs to the WD repeat G protein beta family.

This chain is Guanine nucleotide-binding protein subunit beta-like protein, found in Encephalitozoon cuniculi (strain GB-M1) (Microsporidian parasite).